The following is a 304-amino-acid chain: Putative S-adenosyl-L-methionine-dependent methyltransferase MAV_4444 (304 aa).

Residues aspartate 130 and 159-160 (DL) contribute to the S-adenosyl-L-methionine site.

The protein belongs to the UPF0677 family.

Exhibits S-adenosyl-L-methionine-dependent methyltransferase activity. The chain is Putative S-adenosyl-L-methionine-dependent methyltransferase MAV_4444 from Mycobacterium avium (strain 104).